The sequence spans 2293 residues: Protein Ycf2 A (2293 aa).

ATP is bound at residue 1647–1654 (GSIGTGRS).

It belongs to the Ycf2 family.

It is found in the plastid. Its subcellular location is the chloroplast stroma. In terms of biological role, probable ATPase of unknown function. Its presence in a non-photosynthetic plant (Epifagus virginiana) and experiments in tobacco indicate that it has an essential function which is probably not related to photosynthesis. In Crucihimalaya wallichii (Rock-cress), this protein is Protein Ycf2 A.